The sequence spans 250 residues: UPF0524 protein C3orf70 (250 aa).

Residues 201 to 250 (ESCDEDTEEGAELSSEEDYSPESSWEPDECTLLSPSQSDLEVIETIETTV) form a disordered region. The span at 202–229 (SCDEDTEEGAELSSEEDYSPESSWEPDE) shows a compositional bias: acidic residues.

It belongs to the UPF0524 family.

May play a role in neuronal and neurobehavioral development. The chain is UPF0524 protein C3orf70 (C3orf70) from Homo sapiens (Human).